We begin with the raw amino-acid sequence, 86 residues long: Weak toxin 3 (86 aa).

The signal sequence occupies residues 1–23; it reads MKTLLLTLVVVTIVCLDLGYTLT. Cystine bridges form between C24–C45, C27–C32, C38–C63, C67–C78, and C79–C84.

This sequence belongs to the three-finger toxin family. Ancestral subfamily. Orphan group II sub-subfamily. As to expression, expressed by the venom gland.

Its subcellular location is the secreted. Its function is as follows. Binds with low affinity to muscular (alpha-1-beta-1-delta-epsilon/CHRNA1-CHRNB1-CHRND-CHRNE) and very low affinity to neuronal (alpha-7/CHRNA7) nicotinic acetylcholine receptor (nAChR). The chain is Weak toxin 3 from Bungarus candidus (Malayan krait).